Consider the following 232-residue polypeptide: Imidazoleglycerol-phosphate dehydratase (232 aa).

The protein belongs to the imidazoleglycerol-phosphate dehydratase family.

It catalyses the reaction D-erythro-1-(imidazol-4-yl)glycerol 3-phosphate = 3-(imidazol-4-yl)-2-oxopropyl phosphate + H2O. It participates in amino-acid biosynthesis; L-histidine biosynthesis; L-histidine from 5-phospho-alpha-D-ribose 1-diphosphate: step 6/9. This Lachancea kluyveri (strain ATCC 58438 / CBS 3082 / BCRC 21498 / NBRC 1685 / JCM 7257 / NCYC 543 / NRRL Y-12651) (Yeast) protein is Imidazoleglycerol-phosphate dehydratase (HIS3).